Reading from the N-terminus, the 246-residue chain is Acetoacetyl-CoA reductase (246 aa).

Residues 13–15 (GGI), Gly-35, Arg-40, 60–62 (GNV), and 88–92 (NAGIT) each bind NADP(+). Residues Asp-94 and 147–150 (QFGQ) each bind substrate. Tyr-153 acts as the Proton acceptor in catalysis. 183 to 186 (PGYI) contributes to the NADP(+) binding site. Residues 184–185 (GY) and Arg-195 each bind substrate.

Belongs to the short-chain dehydrogenases/reductases (SDR) family. Homotetramer.

It is found in the cytoplasm. It catalyses the reaction a (3R)-3-hydroxyacyl-CoA + NADP(+) = a 3-oxoacyl-CoA + NADPH + H(+). It carries out the reaction (3R)-3-hydroxybutanoyl-CoA + NADP(+) = acetoacetyl-CoA + NADPH + H(+). Its pathway is biopolymer metabolism; poly-(R)-3-hydroxybutanoate biosynthesis. Its function is as follows. Catalyzes the chiral reduction of acetoacetyl-CoA to (R)-3-hydroxybutyryl-CoA. Is involved in the biosynthesis of polyhydroxybutyrate (PHB), which is accumulated as an intracellular energy reserve material when cells grow under conditions of nutrient limitation. The protein is Acetoacetyl-CoA reductase of Cupriavidus necator (strain ATCC 17699 / DSM 428 / KCTC 22496 / NCIMB 10442 / H16 / Stanier 337) (Ralstonia eutropha).